A 435-amino-acid chain; its full sequence is Serine carboxypeptidase-like 16 (435 aa).

The N-terminal stretch at 1–23 (MGSWIPKLLLLQLVLLLTKHADS) is a signal peptide. 3 disulfides stabilise this stretch: Cys82–Cys325, Cys246–Cys260, and Cys284–Cys291. Asn103 carries N-linked (GlcNAc...) asparagine glycosylation. Residue Ser178 is part of the active site. Asn305 carries an N-linked (GlcNAc...) asparagine glycan. Asp360 is an active-site residue. A glycan (N-linked (GlcNAc...) asparagine) is linked at Asn376. His413 is an active-site residue.

It belongs to the peptidase S10 family. In terms of tissue distribution, expressed in seedlings, roots and leaves.

The protein resides in the secreted. In terms of biological role, probable carboxypeptidase. This chain is Serine carboxypeptidase-like 16 (SCPL16), found in Arabidopsis thaliana (Mouse-ear cress).